A 104-amino-acid polypeptide reads, in one-letter code: Large ribosomal subunit protein bL21 (104 aa).

It belongs to the bacterial ribosomal protein bL21 family. As to quaternary structure, part of the 50S ribosomal subunit. Contacts protein L20.

Functionally, this protein binds to 23S rRNA in the presence of protein L20. The chain is Large ribosomal subunit protein bL21 from Opitutus terrae (strain DSM 11246 / JCM 15787 / PB90-1).